Here is a 448-residue protein sequence, read N- to C-terminus: ATP synthase subunit b-delta (448 aa).

The ATP synthase subunit b stretch occupies residues 1–168 (MSTFIGQLIG…GSVGAAKRPV (168 aa)). A helical membrane pass occupies residues 4–24 (FIGQLIGFAVIVFLVVKYVVP). The interval 169–448 (PGGYSGMHAA…LSAAALHLPN (280 aa)) is ATP synthase subunit delta.

This sequence in the N-terminal section; belongs to the ATPase B chain family. It in the C-terminal section; belongs to the ATPase delta chain family. In terms of assembly, F-type ATPases have 2 components, F(1) - the catalytic core - and F(0) - the membrane proton channel. F(1) has five subunits: alpha(3), beta(3), gamma(1), delta(1), epsilon(1). F(0) has three main subunits: a(1), b(2) and c(10-14). The alpha and beta chains form an alternating ring which encloses part of the gamma chain. F(1) is attached to F(0) by a central stalk formed by the gamma and epsilon chains, while a peripheral stalk is formed by the delta and b chains.

It localises to the cell membrane. Functionally, f(1)F(0) ATP synthase produces ATP from ADP in the presence of a proton or sodium gradient. F-type ATPases consist of two structural domains, F(1) containing the extramembraneous catalytic core and F(0) containing the membrane proton channel, linked together by a central stalk and a peripheral stalk. During catalysis, ATP synthesis in the catalytic domain of F(1) is coupled via a rotary mechanism of the central stalk subunits to proton translocation. This fusion protein includes a component of the F(0) channel (subunit b) and of the F(1) subunit (subunit delta). Two copies of subunit b and one of delta together form the peripheral 'stator' stalk which links F(1) to F(0). The sequence is that of ATP synthase subunit b-delta (atpFH) from Mycobacteroides abscessus (strain ATCC 19977 / DSM 44196 / CCUG 20993 / CIP 104536 / JCM 13569 / NCTC 13031 / TMC 1543 / L948) (Mycobacterium abscessus).